A 251-amino-acid chain; its full sequence is 1-(5-phosphoribosyl)-5-[(5-phosphoribosylamino)methylideneamino] imidazole-4-carboxamide isomerase (251 aa).

The active-site Proton acceptor is D8. D131 acts as the Proton donor in catalysis.

This sequence belongs to the HisA/HisF family.

It localises to the cytoplasm. The enzyme catalyses 1-(5-phospho-beta-D-ribosyl)-5-[(5-phospho-beta-D-ribosylamino)methylideneamino]imidazole-4-carboxamide = 5-[(5-phospho-1-deoxy-D-ribulos-1-ylimino)methylamino]-1-(5-phospho-beta-D-ribosyl)imidazole-4-carboxamide. Its pathway is amino-acid biosynthesis; L-histidine biosynthesis; L-histidine from 5-phospho-alpha-D-ribose 1-diphosphate: step 4/9. The polypeptide is 1-(5-phosphoribosyl)-5-[(5-phosphoribosylamino)methylideneamino] imidazole-4-carboxamide isomerase (Burkholderia thailandensis (strain ATCC 700388 / DSM 13276 / CCUG 48851 / CIP 106301 / E264)).